Here is a 91-residue protein sequence, read N- to C-terminus: Small ribosomal subunit protein uS19 (91 aa).

Belongs to the universal ribosomal protein uS19 family.

Protein S19 forms a complex with S13 that binds strongly to the 16S ribosomal RNA. In Syntrophotalea carbinolica (strain DSM 2380 / NBRC 103641 / GraBd1) (Pelobacter carbinolicus), this protein is Small ribosomal subunit protein uS19.